A 147-amino-acid polypeptide reads, in one-letter code: Putative 2'-deoxynucleoside 5'-phosphate N-hydrolase 1 (147 aa).

Substrate is bound by residues 10–16 (YFCGSIR), Y25, H42, E90, and 114–116 (SAM).

The protein belongs to the 2'-deoxynucleoside 5'-phosphate N-hydrolase 1 family. Monomer and homodimer.

It is found in the cytoplasm. The protein resides in the nucleus. It carries out the reaction a pyrimidine 2'-deoxyribonucleoside 5'-phosphate + H2O = a pyrimidine nucleobase + 2-deoxy-D-ribose 5-phosphate. It catalyses the reaction a purine 2'-deoxyribonucleoside 5'-phosphate + H2O = a purine nucleobase + 2-deoxy-D-ribose 5-phosphate. Its function is as follows. Catalyzes the cleavage of the N-glycosidic bond of deoxyribonucleoside 5'-monophosphates to yield deoxyribose 5-phosphate and a purine or pyrimidine base. This chain is Putative 2'-deoxynucleoside 5'-phosphate N-hydrolase 1, found in Nematostella vectensis (Starlet sea anemone).